A 473-amino-acid chain; its full sequence is Adenosylhomocysteinase (473 aa).

Positions 64, 139, and 199 each coordinate substrate. Thr-200–Thr-202 lines the NAD(+) pocket. Residues Lys-229 and Asp-233 each coordinate substrate. NAD(+) contacts are provided by residues Asn-234, Gly-263–Gly-268, Glu-286, Asn-321, Ile-342–His-344, and Asn-387.

This sequence belongs to the adenosylhomocysteinase family. NAD(+) is required as a cofactor.

It localises to the cytoplasm. The catalysed reaction is S-adenosyl-L-homocysteine + H2O = L-homocysteine + adenosine. It participates in amino-acid biosynthesis; L-homocysteine biosynthesis; L-homocysteine from S-adenosyl-L-homocysteine: step 1/1. Its function is as follows. May play a key role in the regulation of the intracellular concentration of adenosylhomocysteine. The chain is Adenosylhomocysteinase from Burkholderia mallei (strain SAVP1).